We begin with the raw amino-acid sequence, 85 residues long: MKMTLIAILTCAAVLVLHTTAAEELEAESQLMEVGMPDTELEAVDEERLFECSVSCEIEKEGNKDCKKKKCKGGWKCKFNMCVEV.

An N-terminal signal peptide occupies residues 1–22 (MKMTLIAILTCAAVLVLHTTAA). Positions 23 to 48 (EELEAESQLMEVGMPDTELEAVDEER) are excised as a propeptide. 3 cysteine pairs are disulfide-bonded: cysteine 52–cysteine 66, cysteine 56–cysteine 77, and cysteine 71–cysteine 82.

The protein belongs to the neurotoxin 12 (Hwtx-2) family. 02 (Hwtx-2) subfamily. Expressed by the venom gland.

It is found in the secreted. Postsynaptic neurotoxin. This is U4-theraphotoxin-Hhn1u from Cyriopagopus hainanus (Chinese bird spider).